Reading from the N-terminus, the 461-residue chain is Protein YIG1 (461 aa).

Residues 58–80 (SNVGEDGGDVGNYSEEDDDGDEE) form a disordered region. The span at 71-80 (SEEDDDGDEE) shows a compositional bias: acidic residues.

It localises to the cytoplasm. Its subcellular location is the nucleus. Its function is as follows. Involved in the regulation of anaerobiotic glycerol metabolism. This is Protein YIG1 (YIG1) from Saccharomyces cerevisiae (strain ATCC 204508 / S288c) (Baker's yeast).